Consider the following 206-residue polypeptide: Large ribosomal subunit protein uL22m (206 aa).

The N-terminal 40 residues, 1-40 (MAAALLRELGALRVPNLRIWATQTLRVLPPSCIHTSASLD), are a transit peptide targeting the mitochondrion.

It belongs to the universal ribosomal protein uL22 family. As to quaternary structure, component of the mitochondrial ribosome large subunit (39S) which comprises a 16S rRNA and about 50 distinct proteins.

Its subcellular location is the mitochondrion. This is Large ribosomal subunit protein uL22m (Mrpl22) from Mus musculus (Mouse).